Reading from the N-terminus, the 872-residue chain is Valine--tRNA ligase (872 aa).

The 'HIGH' region signature appears at 46-56 (PNVTGKLHIGH). Residues 523 to 527 (KMSKS) carry the 'KMSKS' region motif. Lys526 is an ATP binding site. A coiled-coil region spans residues 796–872 (IEIANDSFIN…KDKLKELTND (77 aa)).

This sequence belongs to the class-I aminoacyl-tRNA synthetase family. ValS type 1 subfamily. In terms of assembly, monomer.

Its subcellular location is the cytoplasm. The enzyme catalyses tRNA(Val) + L-valine + ATP = L-valyl-tRNA(Val) + AMP + diphosphate. Catalyzes the attachment of valine to tRNA(Val). As ValRS can inadvertently accommodate and process structurally similar amino acids such as threonine, to avoid such errors, it has a 'posttransfer' editing activity that hydrolyzes mischarged Thr-tRNA(Val) in a tRNA-dependent manner. The sequence is that of Valine--tRNA ligase from Mycoplasma mycoides subsp. mycoides SC (strain CCUG 32753 / NCTC 10114 / PG1).